The chain runs to 605 residues: Ubiquitin carboxyl-terminal hydrolase 2 (605 aa).

Residues 1–200 (MSQLSSTLKR…CPEYLVDYLE (200 aa)) are necessary for interaction with MDM4. Disordered stretches follow at residues 71–107 (LLDY…GSGL) and 237–264 (WETG…KSAQ). Residues 90-100 (KRAESQTRGTE) are compositionally biased toward basic and acidic residues. Residues 245-255 (PGPSRSSSPGR) show a composition bias toward low complexity. The region spanning 267–599 (AGLRNLGNTC…DAYLLFYELA (333 aa)) is the USP domain. C276 acts as the Nucleophile in catalysis. Positions 403 to 503 (YLEREDSRIG…FPKILVLHLK (101 aa)) are necessary for interaction with MDM4. The Zn(2+) site is built by C425, C428, C476, and C479. The active-site Proton acceptor is H557.

It belongs to the peptidase C19 family. USP2 subfamily. In terms of assembly, homooligomer. Found in trimeric complex with MDM2 and MDM4 and USP2. Interacts with CCND1; the interaction is direct and promotes its stabilization by antagonizing ubiquitin-dependent degradation. Interacts (via N-terminus and C-terminus) with MDM2. Interacts with MDM4. Interacts with PER1. Interacts with KCNQ1; counteracts the NEDD4L-specific down-regulation of I(Ks) and restore plasma membrane localization of KCNQ1. Isoform 4: Interacts with NHERF4 and CLTC. In terms of tissue distribution, expressed in mesangial cells of the kidney and in different types of glomerulonephritides (at protein level).

The protein resides in the cytoplasm. It is found in the perinuclear region. Its subcellular location is the nucleus. The protein localises to the membrane. It catalyses the reaction Thiol-dependent hydrolysis of ester, thioester, amide, peptide and isopeptide bonds formed by the C-terminal Gly of ubiquitin (a 76-residue protein attached to proteins as an intracellular targeting signal).. Its activity is regulated as follows. Cleavage is inhibited by ubiquitin in a dosage-dependent manner. Cleavage is blocked by ubiquitin aldehyde. In terms of biological role, hydrolase that deubiquitinates polyubiquitinated target proteins such as MDM2, MDM4 and CCND1. Isoform 1 and isoform 4 possess both ubiquitin-specific peptidase and isopeptidase activities. Deubiquitinates MDM2 without reversing MDM2-mediated p53/TP53 ubiquitination and thus indirectly promotes p53/TP53 degradation and limits p53 activity. Has no deubiquitinase activity against p53/TP53. Prevents MDM2-mediated degradation of MDM4. Plays a role in the G1/S cell-cycle progression in normal and cancer cells. Regulates the circadian clock by modulating its intrinsic circadian rhythm and its capacity to respond to external cues. Associates with clock proteins and deubiquitinates core clock component PER1 but does not affect its overall stability. Regulates the nucleocytoplasmic shuttling and nuclear retention of PER1 and its repressive role on the clock transcription factors CLOCK and BMAL1. Plays a role in the regulation of myogenic differentiation of embryonic muscle cells. Its function is as follows. Circadian clock output effector that regulates Ca(2+) absorption in the small intestine. Probably functions by regulating protein levels of the membrane scaffold protein NHERF4 in a rhythmic manner, and is therefore likely to control Ca(2+) membrane permeability mediated by the Ca(2+) channel TRPV6 in the intestine. The sequence is that of Ubiquitin carboxyl-terminal hydrolase 2 (USP2) from Homo sapiens (Human).